We begin with the raw amino-acid sequence, 704 residues long: Inhibitor of carbonic anhydrase (704 aa).

The N-terminal stretch at 1 to 19 (MRLAFCVLLCAGSLGLCLA) is a signal peptide. Transferrin-like domains lie at 25–347 (VRWC…HLRR) and 357–689 (VMWC…NVRQ). 16 disulfides stabilise this stretch: Cys-28-Cys-67, Cys-38-Cys-58, Cys-137-Cys-213, Cys-172-Cys-188, Cys-175-Cys-196, Cys-185-Cys-198, Cys-246-Cys-260, Cys-360-Cys-392, Cys-370-Cys-383, Cys-417-Cys-699, Cys-440-Cys-662, Cys-472-Cys-549, Cys-496-Cys-690, Cys-506-Cys-520, Cys-517-Cys-532, and Cys-589-Cys-603. N-linked (GlcNAc...) asparagine glycosylation is present at Asn-491.

The protein belongs to the transferrin family. As to quaternary structure, monomer. Interacts (via transferrin-like domain 2) with CA2. Post-translationally, N-glycosylated. In terms of tissue distribution, blood plasma (at protein level).

The protein localises to the secreted. Inhibitor for carbonic anhydrase 2 (CA2). Does not bind iron ions. In Sus scrofa (Pig), this protein is Inhibitor of carbonic anhydrase.